The chain runs to 143 residues: uncharacterized protein (143 aa).

The segment at 1–21 (MAAMDTGQRADPSNPGDKEGD) is disordered.

This is an uncharacterized protein from Homo sapiens (Human).